Reading from the N-terminus, the 25-residue chain is uncharacterized protein (25 aa).

This is an uncharacterized protein from Archaeoglobus fulgidus (strain ATCC 49558 / DSM 4304 / JCM 9628 / NBRC 100126 / VC-16).